We begin with the raw amino-acid sequence, 310 residues long: Deoxypodophyllotoxin synthase (310 aa).

Residues 159–258 enclose the Fe2OG dioxygenase domain; the sequence is STNYLLHFMR…RLSTSSFSFP (100 aa). Positions 184, 186, and 239 each coordinate Fe cation. Arginine 249 contributes to the 2-oxoglutarate binding site.

The protein belongs to the iron/ascorbate-dependent oxidoreductase family. Fe(2+) serves as cofactor. Mostly expressed in leaves and stems.

It catalyses the reaction (-)-yatein + 2-oxoglutarate + O2 = (-)-deoxypodophyllotoxin + succinate + CO2 + H2O. Its pathway is aromatic compound metabolism; phenylpropanoid biosynthesis. In terms of biological role, 2-oxoglutarate-dependent dioxygenase involved in the biosynthesis of etoposide, a chemotherapeutic compound of the topoisomerase inhibitor family. Catalyzes the conversion of yatein to deoxypodophyllotoxin. Can also use, to some extent, demethylyatein as substrate. The polypeptide is Deoxypodophyllotoxin synthase (Sinopodophyllum hexandrum (Himalayan may apple)).